We begin with the raw amino-acid sequence, 473 residues long: Phosphatidylserine synthase 2 (473 aa).

The interval 1-25 (MRRGERRVAGGSGSESPLLKGRRST) is disordered. Topologically, residues 1-40 (MRRGERRVAGGSGSESPLLKGRRSTESEVYDDGTNTFFWR) are cytoplasmic. Residues serine 12, serine 14, and serine 16 each carry the phosphoserine modification. A helical membrane pass occupies residues 41–61 (AHTLTVLFILTCALGYVTLLE). The Lumenal segment spans residues 62–74 (ETPQDTAYNTKRG). A helical membrane pass occupies residues 75 to 95 (IVASILVFLCFGVTQAKDGPF). Over 96–104 (SRPHPAYWR) the chain is Cytoplasmic. A helical transmembrane segment spans residues 105 to 125 (FWLCVSVVYELFLIFILFQTV). Residues 126–291 (QDGRQFLKYV…EWKPASSLHR (166 aa)) lie on the Lumenal side of the membrane. Asparagine 159 is a glycosylation site (N-linked (GlcNAc...) asparagine). The helical transmembrane segment at 292–312 (WLAVCGIILVFLLAELNTFYL) threads the bilayer. Position 313 (lysine 313) is a topological domain, cytoplasmic. Residues 314 to 334 (FVLWMPPEHYLVLLRLVFFVN) traverse the membrane as a helical segment. Residues 335–354 (VGGVAMREIYDFMDELKPHR) lie on the Lumenal side of the membrane. The helical transmembrane segment at 355–375 (KLGQQAWLVAAITVTELLIVV) threads the bilayer. Residues 376–381 (KYDPHT) lie on the Cytoplasmic side of the membrane. A helical membrane pass occupies residues 382–402 (LTLSLPFYISQCWTLGSILVL). Over 403 to 473 (TWTVWRFFLR…TAEEGTSAAS (71 aa)) the chain is Lumenal. Positions 422-473 (RRQKQQSHQARAVNNRDGHPGPDDDLLGTGTAEEEGTTNDGVTAEEGTSAAS) are disordered.

Belongs to the phosphatidyl serine synthase family. As to expression, highly expressed in testis. Detected at lower levels in kidney and heart.

Its subcellular location is the endoplasmic reticulum membrane. The protein resides in the membrane. It carries out the reaction a 1,2-diacyl-sn-glycero-3-phosphoethanolamine + L-serine = a 1,2-diacyl-sn-glycero-3-phospho-L-serine + ethanolamine. The enzyme catalyses 1-hexadecanoyl-2-(9Z-octadecenoyl)-sn-glycero-3-phosphoethanolamine + L-serine = 1-hexadecanoyl-2-(9Z-octadecenoyl)-sn-glycero-3-phospho-L-serine + ethanolamine. It catalyses the reaction 1-hexadecanoyl-2-(4Z,7Z,10Z,13Z,16Z,19Z-docosahexaenoyl)-sn-glycero-3-phosphoethanolamine + L-serine = 1-hexadecanoyl-2-(4Z,7Z,10Z,13Z,16Z,19Z-docosahexaenoyl)-sn-glycero-3-phosphoserine + ethanolamine. The catalysed reaction is 1-octadecanoyl-2-(5Z,8Z,11Z,14Z)-eicosatetraenoyl-sn-glycero-3-phosphoethanolamine + L-serine = 1-octadecanoyl-2-(5Z,8Z,11Z,14Z)-eicosatetraenoyl-sn-glycero-3-phosphoserine + ethanolamine. It carries out the reaction 1-octadecanoyl-2-(4Z,7Z,10Z,13Z,16Z,19Z-docosahexaenoyl)-sn-glycero-3-phosphoethanolamine + L-serine = 1-octadecanoyl-2-(4Z,7Z,10Z,13Z,16Z,19Z-docosahexaenoyl)-sn-glycero-3-phosphoserine + ethanolamine. The enzyme catalyses 1-(1Z-octadecenyl)-2-(4Z,7Z,10Z,13Z,16Z,19Z-docosahexaenoyl)-sn-glycero-3-phosphoethanolamine + L-serine = 1-(1Z-octadecenyl)-2-(4Z,7Z,10Z,13Z,16Z,19Z-docosahexaenoyl)-sn-glycero-3-phospho-L-serine + ethanolamine. It catalyses the reaction 1-octadecanoyl-2-(9Z-octadecenoyl)-sn-glycero-3-phosphoethanolamine + L-serine = 1-octadecanoyl-2-(9Z-octadecenoyl)-sn-glycero-3-phospho-L-serine + ethanolamine. The catalysed reaction is 1-(1Z-octadecenyl)-2-(9Z-octadecenoyl)-sn-glycero-3-phosphoethanolamine + L-serine = 1-(1Z-octadecenyl)-2-(9Z-octadecenoyl)-sn-glycero-3-phospho-L-serine + ethanolamine. It carries out the reaction 1-(1Z-octadecenyl)-2-(5Z,8Z,11Z,14Z- eicosatetraenoyl)-sn-glycero-3-phosphoethanolamine + L-serine = 1-(1Z-octadecenyl)-2-(5Z,8Z,11Z,14Z-eicosatetraenoyl)-sn-glycero-3-phospho-L-serine + ethanolamine. The protein operates within phospholipid metabolism; phosphatidylserine biosynthesis. Almost complete inhibition by ethanolamine in both the mitochondria-associated membrane (MAM) and endoplasmic reticulum (ER) per se. Catalyzes a base-exchange reaction in which the polar head group of phosphatidylethanolamine (PE) or phosphatidylcholine (PC) is replaced by L-serine. Catalyzes the conversion of phosphatatidylethanolamine and does not act on phosphatidylcholine. Can utilize both phosphatidylethanolamine (PE) plasmalogen and diacyl PE as substrate and the latter is six times better utilized, indicating the importance of an ester linkage at the sn-1 position. Although it shows no sn-1 fatty acyl preference, exhibits significant preference towards docosahexaenoic acid (22:6n-3) compared with 18:1 or 20:4 at the sn-2 position. This chain is Phosphatidylserine synthase 2 (Ptdss2), found in Mus musculus (Mouse).